We begin with the raw amino-acid sequence, 461 residues long: Glutamate-gated chloride channel alpha (461 aa).

The signal sequence occupies residues 1–20 (MATWIVGKLIIASLILGIQA). The Extracellular segment spans residues 21–275 (QQARTKSQDI…TTIQLKREFS (255 aa)). Residues Arg98, Arg117, and Ser182 each coordinate L-glutamate. Residues Cys191 and Cys205 are joined by a disulfide bond. Ser211 provides a ligand contact to L-glutamate. Asn246 is a glycosylation site (N-linked (GlcNAc...) asparagine). A disulfide bridge connects residues Cys252 and Cys263. A helical transmembrane segment spans residues 276 to 298 (FYLLQLYIPSCMLVIVSWVSFWF). Topologically, residues 299-303 (DRTAI) are cytoplasmic. Residues 304 to 325 (PARVTLGVTTLLTMTAQSAGIN) form a helical membrane-spanning segment. Topologically, residues 326-332 (SQLPPVS) are extracellular. Residues 333–353 (YIKAIDVWIGACMTFIFCALL) form a helical membrane-spanning segment. The Cytoplasmic portion of the chain corresponds to 354–432 (EFALVNHIAN…EWNDISKRVD (79 aa)). Residues 433–454 (LISRALFPVLFFVFNILYWSRF) form a helical membrane-spanning segment. The Extracellular portion of the chain corresponds to 455 to 461 (GQQNVLF).

It belongs to the ligand-gated ion channel (TC 1.A.9) family. Glutamate-gated chloride channel (TC 1.A.9.4) subfamily. Pentamer. Homooligomer, forms functional heterooligomers with glc-2.

Its subcellular location is the postsynaptic cell membrane. The protein resides in the cell membrane. In terms of biological role, glutamate-gated chloride channel subunit; channel properties depend on the subunit composition. Glutamate binding triggers a rapidly reversible current in heteromeric channels formed by glc-1 and glc-2, while the anti-helmintic drug ivermectin and other avermectins trigger a permanently open channel configuration. Channels containing only glc-1 are activated by ivermectin, but not by glutamate alone (in vitro). The heteromeric channel formed by glc-1 and glc-2 is also activated by ibotenate, and it is blocked by picrotoxin and flufenamic acid. Plays a role in the regulation of locomotor behavior. In Caenorhabditis elegans, this protein is Glutamate-gated chloride channel alpha.